Here is a 48-residue protein sequence, read N- to C-terminus: LPDTFDSRKQWPNCPTISEIRDQGSVSVEVSAEDLLSCCGFECGMGCN.

Belongs to the peptidase C1 family. As to quaternary structure, dimer of a heavy chain and a light chain cross-linked by a disulfide bond.

The protein localises to the lysosome. It carries out the reaction Hydrolysis of proteins with broad specificity for peptide bonds. Preferentially cleaves -Arg-Arg-|-Xaa bonds in small molecule substrates (thus differing from cathepsin L). In addition to being an endopeptidase, shows peptidyl-dipeptidase activity, liberating C-terminal dipeptides.. Functionally, thiol protease which is believed to participate in intracellular degradation and turnover of proteins. Has also been implicated in tumor invasion and metastasis. This chain is Cathepsin B (CTSB), found in Coturnix japonica (Japanese quail).